The primary structure comprises 130 residues: MYRALTRDIEVVVEPFYLEEQSDPEDDRYVWGYRIVISNNSGVAVRLVNRYWNITDQNGQVDEVTGPGVVGEQPRLSPGDTYEYSSGCPLDTPSGLMFGHYQMETDEGELFDVDIPAFSLDSPGLLRVLN.

In terms of domain architecture, ApaG spans 3 to 127 (RALTRDIEVV…FSLDSPGLLR (125 aa)). Positions 63–83 (EVTGPGVVGEQPRLSPGDTYE) are disordered.

The sequence is that of Protein ApaG from Rhizobium etli (strain ATCC 51251 / DSM 11541 / JCM 21823 / NBRC 15573 / CFN 42).